A 411-amino-acid polypeptide reads, in one-letter code: Peptidase T (411 aa).

Zn(2+) is bound at residue H78. D80 is a catalytic residue. D140 serves as a coordination point for Zn(2+). E173 acts as the Proton acceptor in catalysis. Positions 174, 196, and 379 each coordinate Zn(2+).

The protein belongs to the peptidase M20B family. It depends on Zn(2+) as a cofactor.

The protein resides in the cytoplasm. It catalyses the reaction Release of the N-terminal residue from a tripeptide.. Functionally, cleaves the N-terminal amino acid of tripeptides. The chain is Peptidase T from Yersinia pseudotuberculosis serotype O:3 (strain YPIII).